Here is a 367-residue protein sequence, read N- to C-terminus: Cellular tumor antigen p53 (367 aa).

The transcription activation (acidic) stretch occupies residues 1–30 (MAEEMEPLLEPTEVFMDLWSMLPYSMQQLP). Positions 30-84 (PLPEDHSNWQELSPLEPSDPPPPPPPPPLPLAAAAPPPLNPPTPPRAAPSPVVPS) are disordered. Positions 46-81 (PSDPPPPPPPPPLPLAAAAPPPLNPPTPPRAAPSPV) are enriched in pro residues. The DNA-binding element occupies 87–278 (DYGGDFDFRV…KIEEENFRKR (192 aa)). Residues Cys161, His164, Cys224, and Cys228 each coordinate Zn(2+). An interaction with DNA region spans residues 259 to 266 (RVCACPGR). Disordered stretches follow at residues 275–303 (FRKRGGAGGVAKRAMSPPTEAPEPPKKRV) and 333–367 (LAEGGSAPRPSKGRRVKVEGPQPSCGKKLLQKGSD). Positions 286–302 (KRAMSPPTEAPEPPKKR) match the Bipartite nuclear localization signal motif. The oligomerization stretch occupies residues 308 to 339 (NEIFYLQVRGRRRYEMLKEINEALQLAEGGSA). A Nuclear export signal motif is present at residues 322–333 (EMLKEINEALQL). Residues 347-364 (RVKVEGPQPSCGKKLLQK) form a basic (repression of DNA-binding) region.

This sequence belongs to the p53 family. Binds DNA as a homotetramer. It depends on Zn(2+) as a cofactor.

Its subcellular location is the cytoplasm. The protein localises to the nucleus. Functionally, multifunctional transcription factor that induces cell cycle arrest, DNA repair or apoptosis upon binding to its target DNA sequence. Acts as a tumor suppressor in many tumor types; induces growth arrest or apoptosis depending on the physiological circumstances and cell type. Negatively regulates cell division by controlling expression of a set of genes required for this process. One of the activated genes is an inhibitor of cyclin-dependent kinases. Apoptosis induction seems to be mediated either by stimulation of BAX and FAS antigen expression, or by repression of Bcl-2 expression. This is Cellular tumor antigen p53 (TP53) from Gallus gallus (Chicken).